Reading from the N-terminus, the 163-residue chain is Cytosolic iron-sulfur assembly component 2B (163 aa).

It belongs to the MIP18 family.

It is found in the nucleus. It localises to the cytoplasm. The protein resides in the cytoskeleton. The protein localises to the spindle. In terms of biological role, component of the cytosolic iron-sulfur (Fe/S) protein assembly machinery. Required for the maturation of extramitochondrial Fe/S proteins. May play a role in chromosome segregation through establishment of sister chromatid cohesion. In Dictyostelium discoideum (Social amoeba), this protein is Cytosolic iron-sulfur assembly component 2B.